The primary structure comprises 409 residues: Arginine deiminase (409 aa).

The active-site Amidino-cysteine intermediate is Cys-399.

Belongs to the arginine deiminase family.

Its subcellular location is the cytoplasm. The enzyme catalyses L-arginine + H2O = L-citrulline + NH4(+). Its pathway is amino-acid degradation; L-arginine degradation via ADI pathway; carbamoyl phosphate from L-arginine: step 1/2. This chain is Arginine deiminase, found in Streptococcus pneumoniae (strain JJA).